The chain runs to 304 residues: tRNA dimethylallyltransferase (304 aa).

16–23 (GPTASGKS) provides a ligand contact to ATP. Residue 18–23 (TASGKS) coordinates substrate. Interaction with substrate tRNA stretches follow at residues 41–44 (DSMQ) and 165–169 (QRIIR).

Belongs to the IPP transferase family. As to quaternary structure, monomer. The cofactor is Mg(2+).

The catalysed reaction is adenosine(37) in tRNA + dimethylallyl diphosphate = N(6)-dimethylallyladenosine(37) in tRNA + diphosphate. Catalyzes the transfer of a dimethylallyl group onto the adenine at position 37 in tRNAs that read codons beginning with uridine, leading to the formation of N6-(dimethylallyl)adenosine (i(6)A). The protein is tRNA dimethylallyltransferase of Allorhizobium ampelinum (strain ATCC BAA-846 / DSM 112012 / S4) (Agrobacterium vitis (strain S4)).